Consider the following 274-residue polypeptide: Formamidopyrimidine-DNA glycosylase (274 aa).

Pro2 serves as the catalytic Schiff-base intermediate with DNA. Glu3 functions as the Proton donor in the catalytic mechanism. Lys57 (proton donor; for beta-elimination activity) is an active-site residue. 3 residues coordinate DNA: His92, Arg111, and Lys152. The FPG-type zinc-finger motif lies at 237-271 (QVYGRKGEECNDCGSIIEAKVIGQRNSFYCPKCQR). Arg261 functions as the Proton donor; for delta-elimination activity in the catalytic mechanism.

The protein belongs to the FPG family. In terms of assembly, monomer. The cofactor is Zn(2+).

It carries out the reaction Hydrolysis of DNA containing ring-opened 7-methylguanine residues, releasing 2,6-diamino-4-hydroxy-5-(N-methyl)formamidopyrimidine.. The catalysed reaction is 2'-deoxyribonucleotide-(2'-deoxyribose 5'-phosphate)-2'-deoxyribonucleotide-DNA = a 3'-end 2'-deoxyribonucleotide-(2,3-dehydro-2,3-deoxyribose 5'-phosphate)-DNA + a 5'-end 5'-phospho-2'-deoxyribonucleoside-DNA + H(+). Its function is as follows. Involved in base excision repair of DNA damaged by oxidation or by mutagenic agents. Acts as a DNA glycosylase that recognizes and removes damaged bases. Has a preference for oxidized purines, such as 7,8-dihydro-8-oxoguanine (8-oxoG). Has AP (apurinic/apyrimidinic) lyase activity and introduces nicks in the DNA strand. Cleaves the DNA backbone by beta-delta elimination to generate a single-strand break at the site of the removed base with both 3'- and 5'-phosphates. This is Formamidopyrimidine-DNA glycosylase from Glaesserella parasuis serovar 5 (strain SH0165) (Haemophilus parasuis).